The primary structure comprises 222 residues: Bone marrow proteoglycan (222 aa).

An N-terminal signal peptide occupies residues methionine 1–alanine 16. The propeptide at leucine 17–glutamine 105 is acidic. Threonine 23 is a glycosylation site (O-linked (GalNAc...) threonine; partial). Serine 24 carries an O-linked (GalNAc...) serine glycan. An O-linked (GalNAc...) threonine glycan is attached at threonine 25. The interval threonine 25–glutamate 75 is disordered. An O-linked (GalNAc...) threonine; partial glycan is attached at threonine 34. The segment covering glutamate 37–tryptophan 60 has biased composition (acidic residues). Serine 62 carries O-linked (Xyl...) (chondroitin sulfate) serine glycosylation. Residue asparagine 86 is glycosylated (N-linked (GlcNAc...) asparagine). The C-type lectin domain maps to cysteine 104–tyrosine 222. Cystine bridges form between cysteine 125–cysteine 220 and cysteine 197–cysteine 212.

In pregnancy serum, the proform exists as a disulfide-linked 2:2 heterotetramer with PAPPA, as a disulfide-linked 2:2 heterotetramer with AGT, and as a complex (probably a 2:2:2 heterohexamer) with AGT and C3dg. In terms of processing, nitrated. As to expression, detected in plasma and urine (at protein level). Detected in placenta (at protein level). High levels of the proform in placenta and pregnancy serum; in placenta, localized to X cells of septa and anchoring villi. Lower levels in a variety of other tissues including kidney, myometrium, endometrium, ovaries, breast, prostate, bone marrow and colon.

The protein localises to the secreted. It localises to the cytoplasmic vesicle. The protein resides in the secretory vesicle. Functionally, cytotoxin and helminthotoxin. Also induces non-cytolytic histamine release from human basophils. Involved in antiparasitic defense mechanisms and immune hypersensitivity reactions. The proform acts as a proteinase inhibitor, reducing the activity of PAPPA. In Homo sapiens (Human), this protein is Bone marrow proteoglycan (PRG2).